Reading from the N-terminus, the 807-residue chain is Putative transmembrane protein ORF807 (807 aa).

5 helical membrane-spanning segments follow: residues 210-230, 234-254, 270-290, 459-479, and 657-677; these read VLML…SDIL, GLST…IVYF, VTIQ…FVIL, ILIG…LVLT, and VALL…MPLV.

The protein localises to the host membrane. This is Putative transmembrane protein ORF807 from Acidianus filamentous virus 1 (isolate United States/Yellowstone) (AFV-1).